Here is a 475-residue protein sequence, read N- to C-terminus: Glutamate--tRNA ligase 1 (475 aa).

Residues 11 to 21 (PSPTGYLHIGG) carry the 'HIGH' region motif. The 'KMSKS' region motif lies at 240–244 (KLSKR). Position 243 (Lys-243) interacts with ATP.

This sequence belongs to the class-I aminoacyl-tRNA synthetase family. Glutamate--tRNA ligase type 1 subfamily. As to quaternary structure, monomer.

It localises to the cytoplasm. It carries out the reaction tRNA(Glu) + L-glutamate + ATP = L-glutamyl-tRNA(Glu) + AMP + diphosphate. Its function is as follows. Catalyzes the attachment of glutamate to tRNA(Glu) in a two-step reaction: glutamate is first activated by ATP to form Glu-AMP and then transferred to the acceptor end of tRNA(Glu). The sequence is that of Glutamate--tRNA ligase 1 from Methylobacterium radiotolerans (strain ATCC 27329 / DSM 1819 / JCM 2831 / NBRC 15690 / NCIMB 10815 / 0-1).